The following is a 308-amino-acid chain: Olfactory receptor 2T7 (308 aa).

At 1–17 (MPTLSFWVCSATPVSPG) the chain is on the extracellular side. The chain crosses the membrane as a helical span at residues 18-40 (FFALILLVFVTSIASNVVKIILI). At 41–51 (HIDSRLHTPMY) the chain is on the cytoplasmic side. A helical membrane pass occupies residues 52–74 (FLLSQLSLRDILYISTIVPKMLV). At 75 to 88 (DQVMSQRAISFAGC) the chain is on the extracellular side. A disulfide bond links C88 and C170. The chain crosses the membrane as a helical span at residues 89–109 (TAQHFLYLTLAGAEFFLLGLM). Topologically, residues 110–130 (SCDRYVAICNPLHYPDLMSRK) are cytoplasmic. The helical transmembrane segment at 131–151 (ICWLIVAAAWLGGSIDGFLLT) threads the bilayer. Over 152 to 188 (PVTMQFPFCASREINHFFCEVPALLKLSCTDTSAYET) the chain is Extracellular. The chain crosses the membrane as a helical span at residues 189–209 (AMYVCCIMMLLIPFSVISGSY). The Cytoplasmic portion of the chain corresponds to 210 to 235 (TRILITVYRMSEAEGRRKAVATCSSH). Residues 236 to 256 (MVVVSLFYGAAMYTYVLPHSY) form a helical membrane-spanning segment. Topologically, residues 257 to 262 (HTPEQD) are extracellular. Residues 263-283 (KAVSAFYTILTPMLNPLIYSL) traverse the membrane as a helical segment. The Cytoplasmic segment spans residues 284–308 (RNKDVTGALQKVVGRCVSSGKVTTF).

This sequence belongs to the G-protein coupled receptor 1 family.

It is found in the cell membrane. In terms of biological role, odorant receptor. This is Olfactory receptor 2T7 (OR2T7) from Homo sapiens (Human).